The primary structure comprises 155 residues: SsrA-binding protein (155 aa).

This sequence belongs to the SmpB family.

The protein localises to the cytoplasm. In terms of biological role, required for rescue of stalled ribosomes mediated by trans-translation. Binds to transfer-messenger RNA (tmRNA), required for stable association of tmRNA with ribosomes. tmRNA and SmpB together mimic tRNA shape, replacing the anticodon stem-loop with SmpB. tmRNA is encoded by the ssrA gene; the 2 termini fold to resemble tRNA(Ala) and it encodes a 'tag peptide', a short internal open reading frame. During trans-translation Ala-aminoacylated tmRNA acts like a tRNA, entering the A-site of stalled ribosomes, displacing the stalled mRNA. The ribosome then switches to translate the ORF on the tmRNA; the nascent peptide is terminated with the 'tag peptide' encoded by the tmRNA and targeted for degradation. The ribosome is freed to recommence translation, which seems to be the essential function of trans-translation. The sequence is that of SsrA-binding protein from Geobacillus kaustophilus (strain HTA426).